We begin with the raw amino-acid sequence, 320 residues long: Taste receptor type 2 member 129 (320 aa).

The Extracellular segment spans residues 1–8 (MDGIVQNM). The chain crosses the membrane as a helical span at residues 9–29 (FTFIVIVEIIIGWIGNGFIAL). Topologically, residues 30 to 55 (VNCIHWYKRRKISALNQILTALAFSR) are cytoplasmic. The chain crosses the membrane as a helical span at residues 56–76 (IYLLLTVFTVIAVSTLYTHVL). Residues 77–88 (VTRRVVKLINFH) are Extracellular-facing. The helical transmembrane segment at 89–109 (LLFSNHFSMWLAACLGLYYFL) threads the bilayer. The Cytoplasmic segment spans residues 110–128 (KIAHFPNSIFVYLKMRINQ). A helical membrane pass occupies residues 129–149 (VVSGTLLMSLGLLFLNTLLIN). Over 150 to 185 (SYIDTKIDDYREHLLYDFTSNNTASFYRVILVINNC) the chain is Extracellular. N-linked (GlcNAc...) asparagine glycosylation occurs at Asn-170. The helical transmembrane segment at 186-206 (IFTSIPFTLSQSTFLLLIFSL) threads the bilayer. The Cytoplasmic portion of the chain corresponds to 207–233 (WRHYKKMQQHAQRCRDVLADAHIRVLQ). A helical transmembrane segment spans residues 234 to 254 (TMVTYVLLCAIFFLSLSMQIL). At 255 to 264 (RSELLKNILY) the chain is on the extracellular side. The chain crosses the membrane as a helical span at residues 265–285 (VRFCEIVAAVFPSGHSCVLIC). The Cytoplasmic portion of the chain corresponds to 286-320 (RDTNLRGTFLSVLSWLKQRFTSWIPNINCRSSCIF).

Belongs to the G-protein coupled receptor T2R family.

It localises to the membrane. In terms of biological role, putative taste receptor which may play a role in the perception of bitterness. This is Taste receptor type 2 member 129 from Mus musculus (Mouse).